The chain runs to 363 residues: Holliday junction branch migration complex subunit RuvB (363 aa).

The segment at 1-44 (MAIKRNQGHGLPPKRDPALGRDALTTSQALPEDQEQSANEDRIR) is disordered. A large ATPase domain (RuvB-L) region spans residues 13 to 204 (PKRDPALGRD…FGLIQRLRFY (192 aa)). Residues I43, R44, G85, K88, T89, T90, R194, Y204, and R241 each coordinate ATP. T89 lines the Mg(2+) pocket. The segment at 205-275 (EVDELIAIVH…VAATALDLYN (71 aa)) is small ATPAse domain (RuvB-S). Residues 278 to 363 (ALGLDWTDRL…EQSTQLDFLP (86 aa)) form a head domain (RuvB-H) region. Residues R333 and R338 each contribute to the DNA site.

The protein belongs to the RuvB family. Homohexamer. Forms an RuvA(8)-RuvB(12)-Holliday junction (HJ) complex. HJ DNA is sandwiched between 2 RuvA tetramers; dsDNA enters through RuvA and exits via RuvB. An RuvB hexamer assembles on each DNA strand where it exits the tetramer. Each RuvB hexamer is contacted by two RuvA subunits (via domain III) on 2 adjacent RuvB subunits; this complex drives branch migration. In the full resolvosome a probable DNA-RuvA(4)-RuvB(12)-RuvC(2) complex forms which resolves the HJ.

Its subcellular location is the cytoplasm. The enzyme catalyses ATP + H2O = ADP + phosphate + H(+). In terms of biological role, the RuvA-RuvB-RuvC complex processes Holliday junction (HJ) DNA during genetic recombination and DNA repair, while the RuvA-RuvB complex plays an important role in the rescue of blocked DNA replication forks via replication fork reversal (RFR). RuvA specifically binds to HJ cruciform DNA, conferring on it an open structure. The RuvB hexamer acts as an ATP-dependent pump, pulling dsDNA into and through the RuvAB complex. RuvB forms 2 homohexamers on either side of HJ DNA bound by 1 or 2 RuvA tetramers; 4 subunits per hexamer contact DNA at a time. Coordinated motions by a converter formed by DNA-disengaged RuvB subunits stimulates ATP hydrolysis and nucleotide exchange. Immobilization of the converter enables RuvB to convert the ATP-contained energy into a lever motion, pulling 2 nucleotides of DNA out of the RuvA tetramer per ATP hydrolyzed, thus driving DNA branch migration. The RuvB motors rotate together with the DNA substrate, which together with the progressing nucleotide cycle form the mechanistic basis for DNA recombination by continuous HJ branch migration. Branch migration allows RuvC to scan DNA until it finds its consensus sequence, where it cleaves and resolves cruciform DNA. This chain is Holliday junction branch migration complex subunit RuvB, found in Picosynechococcus sp. (strain ATCC 27264 / PCC 7002 / PR-6) (Agmenellum quadruplicatum).